We begin with the raw amino-acid sequence, 1260 residues long: uncharacterized protein (1260 aa).

The protein resides in the plastid. It is found in the chloroplast. This is an uncharacterized protein from Ostreococcus tauri.